Consider the following 482-residue polypeptide: UDP-N-acetylmuramate--L-alanine ligase (482 aa).

123-129 (GTHGKTT) is an ATP binding site.

This sequence belongs to the MurCDEF family.

The protein resides in the cytoplasm. The catalysed reaction is UDP-N-acetyl-alpha-D-muramate + L-alanine + ATP = UDP-N-acetyl-alpha-D-muramoyl-L-alanine + ADP + phosphate + H(+). Its pathway is cell wall biogenesis; peptidoglycan biosynthesis. Cell wall formation. The polypeptide is UDP-N-acetylmuramate--L-alanine ligase (Pseudomonas putida (strain ATCC 700007 / DSM 6899 / JCM 31910 / BCRC 17059 / LMG 24140 / F1)).